A 407-amino-acid polypeptide reads, in one-letter code: Substance-P receptor (407 aa).

Topologically, residues 1-31 are extracellular; sequence MDNVLQVDSDLFPNISTNTSEPNQFVQPAWQ. Asn-14 and Asn-18 each carry an N-linked (GlcNAc...) asparagine glycan. Residues 32–54 form a helical membrane-spanning segment; it reads IVLWAAAYTVIVVTSVVGNVVVM. Residues 55 to 64 lie on the Cytoplasmic side of the membrane; the sequence is WIILAHKRMR. The helical transmembrane segment at 65 to 86 threads the bilayer; that stretch reads TVTNYFLVNLAFAEASMAAFNT. Residues 87–106 are Extracellular-facing; it reads VVNFTYAVHNEWYYGLFYCK. Cysteines 105 and 180 form a disulfide. Residues 107-128 form a helical membrane-spanning segment; the sequence is FHNFFPIAAVFASIYSMTAVAF. Residues 129–148 are Cytoplasmic-facing; that stretch reads DRYMAIIHPLQPRLSATATK. The chain crosses the membrane as a helical span at residues 149–169; it reads VVICVIWVLALLLAFPQGYYS. Residues 170 to 194 are Extracellular-facing; sequence TTETMPNRVVCMIEWPEHPNKIYEK. A helical transmembrane segment spans residues 195–219; that stretch reads VYHICVTVLIYFLPLLVIGYAYTVV. Over 220–248 the chain is Cytoplasmic; that stretch reads GITLWASEIPGDSSDRYHEQVSAKRKVVK. Residues 249–270 form a helical membrane-spanning segment; the sequence is MMIVVVCTFAICWLPFHIFFLL. Residues 271 to 283 are Extracellular-facing; sequence PYINPDLYLEKFI. The chain crosses the membrane as a helical span at residues 284–308; the sequence is QQVYLAIMWLAMSSTMYNPIIYCCL. The Cytoplasmic portion of the chain corresponds to 309–407; that stretch reads NDRFRLGFKH…SFSFYSNMLS (99 aa). Residue Cys-322 is the site of S-palmitoyl cysteine attachment. A disordered region spans residues 365–394; that stretch reads HEEELEDGPKTTPSSLDLTSNGSSRSDSKT. The span at 375–394 shows a compositional bias: polar residues; the sequence is TTPSSLDLTSNGSSRSDSKT.

It belongs to the G-protein coupled receptor 1 family. As to quaternary structure, interacts with ARRB1.

Its subcellular location is the cell membrane. Functionally, this is a receptor for the tachykinin neuropeptide substance P. It is probably associated with G proteins that activate a phosphatidylinositol-calcium second messenger system. This chain is Substance-P receptor (TACR1), found in Canis lupus familiaris (Dog).